The sequence spans 98 residues: Integration host factor subunit alpha (98 aa).

A disordered region spans residues 49-71 (FGNFDLRDKNQRPGRNPKTGEDI).

It belongs to the bacterial histone-like protein family. As to quaternary structure, heterodimer of an alpha and a beta chain.

Functionally, this protein is one of the two subunits of integration host factor, a specific DNA-binding protein that functions in genetic recombination as well as in transcriptional and translational control. This is Integration host factor subunit alpha from Shewanella halifaxensis (strain HAW-EB4).